A 526-amino-acid polypeptide reads, in one-letter code: GMP synthase [glutamine-hydrolyzing] (526 aa).

The Glutamine amidotransferase type-1 domain occupies 3–199; sequence RVAIIDFGSQ…FVRIAGCDNN (197 aa). The active-site Nucleophile is the Cys-83. Active-site residues include His-174 and Glu-176. The 193-residue stretch at 200–392 folds into the GMPS ATP-PPase domain; sequence WTVESFLDEQ…LGISDEILMR (193 aa). 227 to 233 contacts ATP; the sequence is SGGVDSS.

As to quaternary structure, homodimer.

The enzyme catalyses XMP + L-glutamine + ATP + H2O = GMP + L-glutamate + AMP + diphosphate + 2 H(+). It participates in purine metabolism; GMP biosynthesis; GMP from XMP (L-Gln route): step 1/1. In terms of biological role, catalyzes the synthesis of GMP from XMP. In Ehrlichia chaffeensis (strain ATCC CRL-10679 / Arkansas), this protein is GMP synthase [glutamine-hydrolyzing].